We begin with the raw amino-acid sequence, 612 residues long: Glutamine--fructose-6-phosphate aminotransferase [isomerizing] (612 aa).

Residue Cys2 is the Nucleophile; for GATase activity of the active site. The 220-residue stretch at 2-221 (CGIVGIVSQR…NGDIAEITNS (220 aa)) folds into the Glutamine amidotransferase type-2 domain. SIS domains follow at residues 289 to 429 (FNKT…IRKI) and 461 to 602 (LVKN…VDHP). Lys607 (for Fru-6P isomerization activity) is an active-site residue.

In terms of assembly, homodimer.

It is found in the cytoplasm. It carries out the reaction D-fructose 6-phosphate + L-glutamine = D-glucosamine 6-phosphate + L-glutamate. Its function is as follows. Catalyzes the first step in hexosamine metabolism, converting fructose-6P into glucosamine-6P using glutamine as a nitrogen source. This is Glutamine--fructose-6-phosphate aminotransferase [isomerizing] from Wigglesworthia glossinidia brevipalpis.